We begin with the raw amino-acid sequence, 165 residues long: Cyanate hydratase (165 aa).

The tract at residues 1-20 is disordered; sequence MAQNKANTVSQLQSLKNKSG. Catalysis depends on residues R90, E93, and S116.

This sequence belongs to the cyanase family.

It catalyses the reaction cyanate + hydrogencarbonate + 3 H(+) = NH4(+) + 2 CO2. Functionally, catalyzes the reaction of cyanate with bicarbonate to produce ammonia and carbon dioxide. The chain is Cyanate hydratase from Medicago truncatula (Barrel medic).